Consider the following 176-residue polypeptide: Ribosome maturation factor RimM (176 aa).

Residues 97–176 (EDEFYWRDLI…QILVDWDPDF (80 aa)) enclose the PRC barrel domain.

It belongs to the RimM family. Binds ribosomal protein uS19.

It localises to the cytoplasm. An accessory protein needed during the final step in the assembly of 30S ribosomal subunit, possibly for assembly of the head region. Essential for efficient processing of 16S rRNA. May be needed both before and after RbfA during the maturation of 16S rRNA. It has affinity for free ribosomal 30S subunits but not for 70S ribosomes. The chain is Ribosome maturation factor RimM from Shewanella oneidensis (strain ATCC 700550 / JCM 31522 / CIP 106686 / LMG 19005 / NCIMB 14063 / MR-1).